The primary structure comprises 123 residues: Large ribosomal subunit protein uL18 (123 aa).

Belongs to the universal ribosomal protein uL18 family. In terms of assembly, part of the 50S ribosomal subunit; part of the 5S rRNA/L5/L18/L25 subcomplex. Contacts the 5S and 23S rRNAs.

This is one of the proteins that bind and probably mediate the attachment of the 5S RNA into the large ribosomal subunit, where it forms part of the central protuberance. In Bifidobacterium adolescentis (strain ATCC 15703 / DSM 20083 / NCTC 11814 / E194a), this protein is Large ribosomal subunit protein uL18.